The sequence spans 305 residues: Epoxyqueuosine reductase (305 aa).

Catalysis depends on D128, which acts as the Proton donor. One can recognise a 4Fe-4S ferredoxin-type domain in the interval 170–202 (LSLTSDTPHAKYCGTCRKCLDICPTKAIVHPFV). [4Fe-4S] cluster is bound by residues C182, C185, C188, C192, C208, C236, C239, and C243.

It belongs to the QueG family. As to quaternary structure, monomer. Cob(II)alamin is required as a cofactor. It depends on [4Fe-4S] cluster as a cofactor.

The protein localises to the cytoplasm. The enzyme catalyses epoxyqueuosine(34) in tRNA + AH2 = queuosine(34) in tRNA + A + H2O. It participates in tRNA modification; tRNA-queuosine biosynthesis. Catalyzes the conversion of epoxyqueuosine (oQ) to queuosine (Q), which is a hypermodified base found in the wobble positions of tRNA(Asp), tRNA(Asn), tRNA(His) and tRNA(Tyr). The chain is Epoxyqueuosine reductase from Atelocyanobacterium thalassa (isolate ALOHA).